Consider the following 209-residue polypeptide: MNKGYPITDLVILAGGQARRMNGLNKLLQQFDGDTQLLKIHQKLKSSVSEIWVNSHRDYSIYQSIVPDIKCFQDDASGFFGPLMGMKSAWSHVRADYVLFIPCDVTYIPTQVVAKLHSALRKNKQAQAAYVSINGDALYPFCLLKRESLEVLEQQIDKQQLSLKNCFKLLHAQVAIFQKQNLFFHSINSLDELQQYKQIKAFKEIFSTN.

GTP contacts are provided by residues 13-15, lysine 26, asparagine 54, aspartate 74, and aspartate 104; that span reads LAG. Aspartate 104 contributes to the Mg(2+) binding site.

This sequence belongs to the MobA family. Monomer. Requires Mg(2+) as cofactor.

It localises to the cytoplasm. The catalysed reaction is Mo-molybdopterin + GTP + H(+) = Mo-molybdopterin guanine dinucleotide + diphosphate. Its function is as follows. Transfers a GMP moiety from GTP to Mo-molybdopterin (Mo-MPT) cofactor (Moco or molybdenum cofactor) to form Mo-molybdopterin guanine dinucleotide (Mo-MGD) cofactor. In Acinetobacter baumannii (strain ACICU), this protein is Molybdenum cofactor guanylyltransferase.